The chain runs to 95 residues: Pancreatic polypeptide prohormone (95 aa).

The first 29 residues, 1 to 29 (MAAARLCLSLLLLSTCVALLLQPLLGAQG), serve as a signal peptide directing secretion. Position 65 is a tyrosine amide (tyrosine 65). A propeptide spanning residues 89–95 (ELSPLDL) is cleaved from the precursor.

This sequence belongs to the NPY family.

The protein localises to the secreted. Hormone secreted by pancreatic cells that acts as a regulator of pancreatic and gastrointestinal functions probably by signaling through the G protein-coupled receptor NPY4R2. This Homo sapiens (Human) protein is Pancreatic polypeptide prohormone.